A 208-amino-acid chain; its full sequence is Microtubule-associated protein Jupiter (208 aa).

Disordered stretches follow at residues 24 to 43 and 82 to 106; these read RPPG…QTPR and RGQK…PGKN. Serine 30 is modified (phosphoserine). Threonine 41 bears the Phosphothreonine mark. The segment covering 82–93 has biased composition (basic and acidic residues); sequence RGQKTVDSHSRL. Phosphothreonine occurs at positions 98 and 102. A phosphoserine mark is found at serine 111, serine 139, and serine 150. Residues 132–208 are disordered; it reads HYNGKSGSVS…PPGGYSSGLW (77 aa). A compositionally biased stretch (low complexity) spans 137 to 150; the sequence is SGSVSSASSSVSSS. Polar residues-rich tracts occupy residues 151–165 and 178–189; these read TENL…SEGN and EYSQRQESSNGG.

It belongs to the MAP Jupiter family. In terms of tissue distribution, ubiquitous expression throughout development. Expressed during cell division in the syncytial embryo. Expressed in developing photoreceptors of the eye imaginal disk of the third larval stage. In adults, highly expressed in neurons of the brain, concentrated in axons. In the adult ovaries, expression accumulates in the germarium and the polar follicular cells as well as in the oocyte along the microtubule network.

The protein localises to the nucleus. It localises to the cytoplasm. It is found in the cytoskeleton. The protein resides in the spindle. Binds to all microtubule populations. This chain is Microtubule-associated protein Jupiter, found in Drosophila melanogaster (Fruit fly).